A 461-amino-acid polypeptide reads, in one-letter code: tRNA modification GTPase MnmE (461 aa).

3 residues coordinate (6S)-5-formyl-5,6,7,8-tetrahydrofolate: lysine 32, glutamate 89, and lysine 128. The TrmE-type G domain maps to 224 to 387; that stretch reads GHALSIVGKP…LGQKISAFFP (164 aa). K(+) is bound at residue asparagine 234. Residues 234 to 239, 253 to 259, and 278 to 281 each bind GTP; these read NAGKSS, SDIKGTT, and DTAG. Mg(2+) is bound at residue serine 238. K(+) contacts are provided by serine 253, isoleucine 255, and threonine 258. Threonine 259 provides a ligand contact to Mg(2+). Lysine 461 contributes to the (6S)-5-formyl-5,6,7,8-tetrahydrofolate binding site.

It belongs to the TRAFAC class TrmE-Era-EngA-EngB-Septin-like GTPase superfamily. TrmE GTPase family. In terms of assembly, homodimer. Heterotetramer of two MnmE and two MnmG subunits. K(+) serves as cofactor.

The protein resides in the cytoplasm. In terms of biological role, exhibits a very high intrinsic GTPase hydrolysis rate. Involved in the addition of a carboxymethylaminomethyl (cmnm) group at the wobble position (U34) of certain tRNAs, forming tRNA-cmnm(5)s(2)U34. This is tRNA modification GTPase MnmE from Helicobacter pylori (strain HPAG1).